The chain runs to 194 residues: ATP-dependent Clp protease proteolytic subunit (194 aa).

The active-site Nucleophile is the Ser98. His123 is an active-site residue.

The protein belongs to the peptidase S14 family. In terms of assembly, fourteen ClpP subunits assemble into 2 heptameric rings which stack back to back to give a disk-like structure with a central cavity, resembling the structure of eukaryotic proteasomes.

Its subcellular location is the cytoplasm. It carries out the reaction Hydrolysis of proteins to small peptides in the presence of ATP and magnesium. alpha-casein is the usual test substrate. In the absence of ATP, only oligopeptides shorter than five residues are hydrolyzed (such as succinyl-Leu-Tyr-|-NHMec, and Leu-Tyr-Leu-|-Tyr-Trp, in which cleavage of the -Tyr-|-Leu- and -Tyr-|-Trp bonds also occurs).. Its function is as follows. Cleaves peptides in various proteins in a process that requires ATP hydrolysis. Has a chymotrypsin-like activity. Plays a major role in the degradation of misfolded proteins. The polypeptide is ATP-dependent Clp protease proteolytic subunit (Acetivibrio thermocellus (strain ATCC 27405 / DSM 1237 / JCM 9322 / NBRC 103400 / NCIMB 10682 / NRRL B-4536 / VPI 7372) (Clostridium thermocellum)).